Consider the following 542-residue polypeptide: Chaperonin GroEL 3 (542 aa).

ATP-binding positions include 30 to 33 (TLGP), lysine 51, 87 to 91 (DGTTT), glycine 415, and aspartate 494. Residues 523 to 542 (KPKKKEPPMPAMPSDMGDYD) form a disordered region.

This sequence belongs to the chaperonin (HSP60) family. In terms of assembly, forms a cylinder of 14 subunits composed of two heptameric rings stacked back-to-back. Interacts with the co-chaperonin GroES.

The protein localises to the cytoplasm. The catalysed reaction is ATP + H2O + a folded polypeptide = ADP + phosphate + an unfolded polypeptide.. Its function is as follows. Together with its co-chaperonin GroES, plays an essential role in assisting protein folding. The GroEL-GroES system forms a nano-cage that allows encapsulation of the non-native substrate proteins and provides a physical environment optimized to promote and accelerate protein folding. The sequence is that of Chaperonin GroEL 3 from Syntrophus aciditrophicus (strain SB).